The primary structure comprises 32 residues: Delta-conotoxin EVIA (32 aa).

Intrachain disulfides connect C3–C21, C10–C25, and C20–C29. P6 carries the post-translational modification 4-hydroxyproline. The residue at position 32 (L32) is a Leucine amide.

This sequence belongs to the conotoxin O1 superfamily. As to expression, expressed by the venom duct.

The protein localises to the secreted. Delta-conotoxins bind to site 6 of voltage-gated sodium channels and inhibit the inactivation process. This toxin inhibits sodium channel inactivation in neuronal membranes from amphibians and mammals (Nav1.2a/SCN1A, Nav1.3/SCN3A and Nav1.6/SCN8A) upon binding to receptor site 6. The sequence is that of Delta-conotoxin EVIA from Conus ermineus (Agate cone).